We begin with the raw amino-acid sequence, 1372 residues long: DNA-directed RNA polymerase subunit beta' (1372 aa).

Positions 69, 71, 84, and 87 each coordinate Zn(2+). The Mg(2+) site is built by Asp-460, Asp-462, and Asp-464. Residues Cys-808, Cys-882, Cys-889, and Cys-892 each coordinate Zn(2+).

Belongs to the RNA polymerase beta' chain family. As to quaternary structure, the RNAP catalytic core consists of 2 alpha, 1 beta, 1 beta' and 1 omega subunit. When a sigma factor is associated with the core the holoenzyme is formed, which can initiate transcription. Mg(2+) is required as a cofactor. It depends on Zn(2+) as a cofactor.

The enzyme catalyses RNA(n) + a ribonucleoside 5'-triphosphate = RNA(n+1) + diphosphate. DNA-dependent RNA polymerase catalyzes the transcription of DNA into RNA using the four ribonucleoside triphosphates as substrates. The polypeptide is DNA-directed RNA polymerase subunit beta' (Rickettsia felis (strain ATCC VR-1525 / URRWXCal2) (Rickettsia azadi)).